The chain runs to 96 residues: Protein ORF5 (96 aa).

Belongs to the microviridae C protein family.

Plays a central role in the packaging of viral DNA into phage procapsid, which occurs in the late stage of infection. Can interact with the replicative complex after the completion of one round of DNA synthesis. When protein ORF5 is bound to the replicative form, the complex becomes accessible to procapsid and serves as a DNA packaging apparatus. This is Protein ORF5 from Chlamydia phage 1 (Bacteriophage Chp1).